Reading from the N-terminus, the 352-residue chain is Dihydrorhizobitoxine desaturase (352 aa).

3 helical membrane passes run 53–73 (LATLCVSWWLYPLAVLLIGAY), 89–109 (LAKNTTWNYVLGILFAAYPLF), and 204–224 (IGILAGSYALGLLHIVILFWI).

This sequence belongs to the fatty acid desaturase type 1 family.

The protein localises to the cell inner membrane. The enzyme catalyses dihydrorhizobitoxine + 2 reduced [2Fe-2S]-[ferredoxin] + O2 + 2 H(+) = rhizobitoxine + 2 oxidized [2Fe-2S]-[ferredoxin] + 2 H2O. In terms of biological role, involved in the biosynthesis of the nodulation enhancer compound rhizobitoxine. Catalyzes the final step of the pathway, the introduction of a carbon double bond into the C3 position of dihydrorhizobitoxine to produce rhizobitoxine. This chain is Dihydrorhizobitoxine desaturase, found in Bradyrhizobium elkanii.